A 349-amino-acid chain; its full sequence is Protein Wnt-7b (349 aa).

The first 24 residues, 1-24 (MHRNFRKWIFYVFLCFGVLYVKLG), serve as a signal peptide directing secretion. 5 cysteine pairs are disulfide-bonded: cysteine 73–cysteine 84, cysteine 123–cysteine 131, cysteine 133–cysteine 152, cysteine 200–cysteine 214, and cysteine 202–cysteine 209. N-linked (GlcNAc...) asparagine glycans are attached at residues asparagine 83 and asparagine 127. Residue serine 206 is the site of O-palmitoleoyl serine; by PORCN attachment. The tract at residues 238–266 (VEVVRASRLRQPTFLRIKQLRSYQKPMET) is disordered linker. Disulfide bonds link cysteine 278–cysteine 309, cysteine 294–cysteine 304, cysteine 308–cysteine 348, cysteine 324–cysteine 339, cysteine 326–cysteine 336, and cysteine 331–cysteine 332. An N-linked (GlcNAc...) asparagine glycan is attached at asparagine 295.

The protein belongs to the Wnt family. As to quaternary structure, forms a soluble 1:1 complex with AFM; this prevents oligomerization and is required for prolonged biological activity. The complex with AFM may represent the physiological form in body fluids. Interacts with FZD1 and FZD10. Interacts with FZD4 (in vitro). Interacts with PORCN. Interacts with glypican GPC3. Interacts (via intrinsically disordered linker region) with RECK; interaction with RECK confers ligand selectivity for Wnt7 in brain endothelial cells and allows these cells to selectively respond to Wnt7. In terms of processing, palmitoleoylation is required for efficient binding to frizzled receptors. Depalmitoleoylation leads to Wnt signaling pathway inhibition. As to expression, moderately expressed in fetal brain, weakly expressed in fetal lung and kidney, and faintly expressed in adult brain, lung and prostate.

Its subcellular location is the secreted. The protein resides in the extracellular space. The protein localises to the extracellular matrix. Ligand for members of the frizzled family of seven transmembrane receptors that functions in the canonical Wnt/beta-catenin signaling pathway. Required for normal fusion of the chorion and the allantois during placenta development. Required for central nervous system (CNS) angiogenesis and blood-brain barrier regulation. The polypeptide is Protein Wnt-7b (WNT7B) (Homo sapiens (Human)).